The chain runs to 368 residues: SH3 domain-containing protein 2 (368 aa).

Coiled-coil stretches lie at residues 1–21 (MDAI…QQQA) and 146–210 (LEDA…LGKE). The 264-residue stretch at 1 to 264 (MDAIRKQASR…MVSERQRIEA (264 aa)) folds into the BAR domain. The segment at 258–281 (ERQRIEAPSTPSSADSMPPPPSYE) is disordered. Residues 299 to 358 (MGYFLGEVLFPYHGVTDVELSLSTGEYVVVRKVTGSGWAEGECKGKAGWFPYGYIERRER) form the SH3 domain.

As to quaternary structure, homodimer. Interacts with FREE1. Interacts (via SH3 domain) with ATG8E and ATG8F. Component of a phosphoinositide 3-kinase (PI3K) complex containing ATG6, SH3P2 and FREE1. Binds to SH3P3 and DRP1A. Forms a complex made of SH3P2 and DRP1A and triggers its accumulation at the cell plate. Highly expressed in seedlings. Detected in flowers, leaves and stems.

Its subcellular location is the cytoplasm. The protein resides in the cytoplasmic vesicle. It localises to the clathrin-coated vesicle. The protein localises to the cell membrane. It is found in the late endosome. Its subcellular location is the autophagosome membrane. In terms of biological role, regulator for autophaosome formation and/or maturation. Binds phosphatidylinositol-phosphate; highest affinity for vesicles containing PtdIns(3,4,5)P(3), followed by those containing PtdIns(4,5)P(2) and PtdIns(3,4)P(2), with minimal binding to phosphatidylinositol monophosphates, including PtdIns(3)P. Together with DRP1A, converts the fused vesicles to tubular structures at the cell plate during cytokinesis. The protein is SH3 domain-containing protein 2 of Arabidopsis thaliana (Mouse-ear cress).